Here is a 37-residue protein sequence, read N- to C-terminus: Large ribosomal subunit protein bL36 (37 aa).

Belongs to the bacterial ribosomal protein bL36 family.

This Mycoplasmopsis pulmonis (strain UAB CTIP) (Mycoplasma pulmonis) protein is Large ribosomal subunit protein bL36.